The primary structure comprises 57 residues: DNA-directed RNA polymerase subunit Rpo6 (57 aa).

Belongs to the archaeal Rpo6/eukaryotic RPB6 RNA polymerase subunit family. As to quaternary structure, part of the RNA polymerase complex.

It is found in the cytoplasm. The enzyme catalyses RNA(n) + a ribonucleoside 5'-triphosphate = RNA(n+1) + diphosphate. Functionally, DNA-dependent RNA polymerase (RNAP) catalyzes the transcription of DNA into RNA using the four ribonucleoside triphosphates as substrates. This is DNA-directed RNA polymerase subunit Rpo6 from Thermococcus gammatolerans (strain DSM 15229 / JCM 11827 / EJ3).